The following is a 355-amino-acid chain: N-acetyl-gamma-glutamyl-phosphate reductase (355 aa).

The active site involves Cys-152.

This sequence belongs to the NAGSA dehydrogenase family. Type 1 subfamily.

It is found in the cytoplasm. It carries out the reaction N-acetyl-L-glutamate 5-semialdehyde + phosphate + NADP(+) = N-acetyl-L-glutamyl 5-phosphate + NADPH + H(+). It participates in amino-acid biosynthesis; L-arginine biosynthesis; N(2)-acetyl-L-ornithine from L-glutamate: step 3/4. In terms of biological role, catalyzes the NADPH-dependent reduction of N-acetyl-5-glutamyl phosphate to yield N-acetyl-L-glutamate 5-semialdehyde. The protein is N-acetyl-gamma-glutamyl-phosphate reductase of Psychrobacter arcticus (strain DSM 17307 / VKM B-2377 / 273-4).